The chain runs to 2431 residues: MPSATGNGARAPIAIIGLACRFPGDASNPSKFWDLLKEGREAYSERTNRYNEDAFHYPGGDNRRQNVLPVKGGYMLKQDPYAWDAAFFNITAAEAIAFDPKQRIAMEVAYEAFENAGMTLQKVAGTQTACYIGTSMSDYRDSIVRDFGNYPKYHLLGTSDEMISNRISHFFDIHGPSATIETACSSSHVATHIACQSLQSGESEMALAGGVGMLLVPESTMQLNNLGFLSPFGQSRAFDETAGGYGRGEGCGMYVLKRLDKAIQDGDTIRAIIRGSGVNQDGWTQGVTMPSGDAQASLIKYVYESNGLDYGATQYVEAHGTGTQAGDPTEAAAIYRTIGQGGQKTNPWRKKLWIGSVKTNIGHLEAAAGAASVIKGVLAMEHGFIPPTIHFKKPNPAVKLEEWNLAVPTKLMPWPACQTRRMSTSAFGMGGTNAHIVLERPNDQALREMSNRSRPLVNGMGEGNNTKKRLFVFSSHDQAGFKRLADAFVEHLDRLGPAAASPEYLANLAYTIATARSGLSWRASCSAESAAELREQLLTTLGENATRASSGQQPRIGFVFTGQGAQWARMGIEMLERRVFGDSVARSAALLREMGCDWDPVTELARAQKEFRLGVPEISQPICTVLQIALVDELRSWGITPSKVVGHSSGEIAAAYCIGALSHSDALAAAYYRGKASAGIKQRQGGMMAVGCSPEAAKKLMTETSLRATVACVNSPSSVTLSGDVGTLEALRAVLEERGVFARRLKVEVAYHSPHMHSCSTEYTAAIQHLEARAAAAHDEEDDRQQRQSPIVMVSSVTGSEVDPEMLGPYYWVRNLISPVLFADAVKELVSPVGEEGNAVDMLVEIGPHSALQGPTEQTLSHHGIKNVRYLSMLTRGENALTTSLNLAAELFRRGVVVDVAKANDDTHCRLLTDLPPYPWNHSQTFRADSRIQRELVAQKFPTKSILGAELPSMDETERVWRGFIRLEEEPWLRDHTVGTTVLFPGAGVISMVLEAAQQMVEPGKTARAFTLRDISFMALMALTDGVATEVITHMRPHLMATTGSTPAAWWEFTVSSCTGVTGPLRNNCRGLISIAYEDTRSPHMIREDAGIEAARIADYHRILRECPETCSKERFYDRLAQSALRYGEIFRGVENCHPGNGKTAFEVKLTDIGETFTRGKLARPFLIHAAALDAVLQAWVGTTSNSNGPGSFGFDAPMLPKSISEMEISARIPAEVGYVMPGFSRSKRHGFNEWSADITMLDTGLSRVFLSIADFRLAELEVDDAAKPDRDTVDVDPAEIASEVHWNFALELLKPAEISRVVSSVGAETAHERLVELVRMAIHQRPAVDVIELVASAEELPDAVMSKLPQGIILPTQVRYGVVKGSADSTHAANIKEDILGRPFALGAPLAADTAPADLFVIPHRVSKNPKDLDTVWESLACLTKSDATILMVAAAAATTTDNGPISSTAPELVAAKGFELISCTPTSTDSLALYHYATKKNTQPERLTNGSVGERVVILEPYKSSTAIRTFSNELRELLEDQGYVVSTRTDIVGARADAGVGASLSAKTCVSLLELEQPVLDNLSEADFQSIRALILNCERLLWVTRGDSPSMRLVDGFARCIRNEIAGIKFQLLHLSSGEGPQHGPGLAARILLAPTADNEFREHDGLLQVSRIYRSLAENDQIRNHLHDSVRVASLPSGNFQDGKSMAGAPPLRLSIGRPGLLNTLHFVPEEESTALAPLADNEVELEVRASGINFRDIMGSMGLLAVTGIGQEASGVVVRTGRLGAEAASLKPGDRVSTLTAGGTHATRIRCDYRVAQRVPEAMSFEEAAGVPVTHCTAYYALVRLANLRRGQSVLVHAAAGGTGQAAVQLAKHMGLVVYATVGTDKKRRLMMEEYGIPEEHIFSSRDGSFVKGIKRITGGRGVDCVLNSLSGELLRLSFSCLATFGTFVEIGLRDITDNMRLDMRPFAKSTTFSFINMVTLLQQDPDTLGEILGEVFKLLREGILRPAQPVTVYPVGQVEEAFRTMQQGKHLGKMILSFTADHGRAPILYRAKDSLKLDPNATYLIVGGLGGLGRSLAMEFAASGARYIAFLSRSGDAKPEARAVIDQLAARGVQARVYRADVADEASFLQAMEDCTQQLPPIKGVVQMAMVLRDVVFEKMKYEEWATGLRPKVQGTWNLHQYFDHERPLDFMIFCSSIAGVFGNPSQAQYAAGNTYQDALASYHRARGLKAVSVNLGIMRDVGVIAEGDSHFMQTWEPVLGIREPAFRALMKSLINGQVQHEHHDGRWPCPPQVCVGLGTGDILATHNLARPAYFEDPRFGPLAVTSVTAAGSSSSGDGATVSLASRLSEVSTNKDPAVAAAIITEALVKTMADILRIPPSEVDPSRPMYRYGVDSLVALEVRNWITKEMKANMTLMEILAAVPMETFAVQIAKKSKLLVGLAA.

Residues 10-440 (RAPIAIIGLA…GTNAHIVLER (431 aa)) form the Ketosynthase family 3 (KS3) domain. Active-site for beta-ketoacyl synthase activity residues include Cys184, His319, and His363. Residues 558 to 895 (FVFTGQGAQW…NLAAELFRRG (338 aa)) are malonyl-CoA:ACP transacylase (MAT) domain. The N-terminal hotdog fold stretch occupies residues 944–1080 (KSILGAELPS…GLISIAYEDT (137 aa)). A PKS/mFAS DH domain is found at 944–1267 (KSILGAELPS…LAELEVDDAA (324 aa)). Positions 946–1264 (ILGAELPSMD…DFRLAELEVD (319 aa)) are dehydratase (DH) domain. The Proton acceptor; for dehydratase activity role is filled by His976. Residues 1108–1267 (PETCSKERFY…LAELEVDDAA (160 aa)) are C-terminal hotdog fold. Asp1174 acts as the Proton donor; for dehydratase activity in catalysis. The interval 1705–2023 (GLLNTLHFVP…QGKHLGKMIL (319 aa)) is enoyl reductase (ER) domain. Cys1822 serves as the catalytic Phosphocysteine intermediate. Residues 2048–2228 (ATYLIVGGLG…VSVNLGIMRD (181 aa)) are ketoreductase (KR) domain. The Carrier domain occupies 2346 to 2423 (VAAAIITEAL…TFAVQIAKKS (78 aa)). Position 2383 is an O-(pantetheine 4'-phosphoryl)serine (Ser2383).

Its pathway is secondary metabolite biosynthesis. Reducing polyketide synthase; part of the gene cluster that mediates the biosynthesis of radicicol, a resorcylic acid lactone (RAL) that irreversibly inhibits the HSP90 molecular chaperone, an important target for cancer chemotherapy. The cluster encodes only two apparent post-PKS enzymes, a cytochrome P450 monooxygenase (radP) and a non-heme halogenase (radH) that introduce the epoxide and the chlorine, respectively. If this cluster includes all the genes required for radicicol biosynthesis, the remaining structural features of radicicol are presumably generated by the PKSs rads1 and rads2. The C-2' ketone could arise if the R-PKS rads1 and NR-PKS rads2 each carry out four iterations, in contrast to the five iteration-three iteration split for the hypothemycin PKSs. The origin of the cis 5',6' double bond is not known. The radicicol R-PKS radS1 ER domain may catalyze either double bond isomerization or reduction in the third iteration. The chain is Reducing polyketide synthase rads1 from Floropilus chiversii (Chaetomium chiversii).